The primary structure comprises 60 residues: UPF0434 protein Dtpsy_1553 (60 aa).

It belongs to the UPF0434 family.

The polypeptide is UPF0434 protein Dtpsy_1553 (Acidovorax ebreus (strain TPSY) (Diaphorobacter sp. (strain TPSY))).